The following is a 236-amino-acid chain: Ribose-5-phosphate isomerase A (236 aa).

Residues 31 to 34, 84 to 87, and 97 to 100 contribute to the substrate site; these read TGST, DGAD, and KGGG. E106 acts as the Proton acceptor in catalysis. K124 lines the substrate pocket.

The protein belongs to the ribose 5-phosphate isomerase family. In terms of assembly, homodimer.

The catalysed reaction is aldehydo-D-ribose 5-phosphate = D-ribulose 5-phosphate. Its pathway is carbohydrate degradation; pentose phosphate pathway; D-ribose 5-phosphate from D-ribulose 5-phosphate (non-oxidative stage): step 1/1. Functionally, catalyzes the reversible conversion of ribose-5-phosphate to ribulose 5-phosphate. This is Ribose-5-phosphate isomerase A from Polynucleobacter asymbioticus (strain DSM 18221 / CIP 109841 / QLW-P1DMWA-1) (Polynucleobacter necessarius subsp. asymbioticus).